The chain runs to 94 residues: Large ribosomal subunit protein bL27 (94 aa).

Residues 1-9 (MLRLDLQFF) constitute a propeptide that is removed on maturation.

Belongs to the bacterial ribosomal protein bL27 family. The N-terminus is cleaved by ribosomal processing cysteine protease Prp.

The sequence is that of Large ribosomal subunit protein bL27 from Bacillus pumilus (strain SAFR-032).